The chain runs to 104 residues: uncharacterized protein (104 aa).

This is an uncharacterized protein from Mycobacterium tuberculosis (strain ATCC 25618 / H37Rv).